A 444-amino-acid chain; its full sequence is Ubiquitin carboxyl-terminal hydrolase MINDY-3 (444 aa).

The Nucleophile role is filled by C51. S124 bears the Phosphoserine mark. The active-site Proton acceptor is the H286.

The protein belongs to the MINDY deubiquitinase family. FAM188 subfamily. As to quaternary structure, interacts with COPS5.

The protein resides in the nucleus. The catalysed reaction is Thiol-dependent hydrolysis of ester, thioester, amide, peptide and isopeptide bonds formed by the C-terminal Gly of ubiquitin (a 76-residue protein attached to proteins as an intracellular targeting signal).. Hydrolase that can remove 'Lys-48'-linked conjugated ubiquitin from proteins. The chain is Ubiquitin carboxyl-terminal hydrolase MINDY-3 from Mus musculus (Mouse).